Reading from the N-terminus, the 185-residue chain is piRNA-mediated silencing protein C19orf84 homolog (185 aa).

Disordered regions lie at residues 1–38 (MDEL…PSLL) and 93–185 (HIWP…EADY). A compositionally biased stretch (polar residues) spans 11 to 25 (NGDNLSLPSAGTESW). Over residues 26–38 (PTSATPGLPPSLL) the composition is skewed to low complexity. A compositionally biased stretch (basic residues) spans 118 to 130 (RPSRGWGRGRGRG). Over residues 139-150 (GPERAEERERNM) the composition is skewed to basic and acidic residues.

Interacts with SPOCD1.

Its subcellular location is the nucleus. It is found in the nucleoplasm. Functionally, protein adapter involved in piRNA-directed transposon methylation by connecting PIWIL4-piRNA and DNA methylation machineries. The PIWIL4-piRNA pathway plays a central role during spermatogenesis by directing transposon DNA methylation and silencing, thereby preventing their mobilization, which is essential for the germline integrity. The protein is piRNA-mediated silencing protein C19orf84 homolog of Mus musculus (Mouse).